The primary structure comprises 118 residues: Large ribosomal subunit protein uL24 (118 aa).

The protein belongs to the universal ribosomal protein uL24 family. In terms of assembly, part of the 50S ribosomal subunit.

Its function is as follows. One of two assembly initiator proteins, it binds directly to the 5'-end of the 23S rRNA, where it nucleates assembly of the 50S subunit. In terms of biological role, one of the proteins that surrounds the polypeptide exit tunnel on the outside of the subunit. This chain is Large ribosomal subunit protein uL24, found in Synechococcus sp. (strain CC9605).